The following is a 427-amino-acid chain: Adenylosuccinate synthetase (427 aa).

GTP is bound by residues 12–18 (GDEGKGK) and 40–42 (GHT). Aspartate 13 acts as the Proton acceptor in catalysis. Mg(2+) contacts are provided by aspartate 13 and glycine 40. IMP is bound by residues 13-16 (DEGK), 38-41 (NAGH), threonine 128, arginine 142, glutamine 223, threonine 238, and arginine 302. Residue histidine 41 is the Proton donor of the active site. 298-304 (TTTGRPR) contacts substrate. GTP is bound by residues arginine 304, 330 to 332 (LLD), and 412 to 414 (SVG).

Belongs to the adenylosuccinate synthetase family. As to quaternary structure, homodimer. Requires Mg(2+) as cofactor.

It is found in the cytoplasm. The catalysed reaction is IMP + L-aspartate + GTP = N(6)-(1,2-dicarboxyethyl)-AMP + GDP + phosphate + 2 H(+). It functions in the pathway purine metabolism; AMP biosynthesis via de novo pathway; AMP from IMP: step 1/2. In terms of biological role, plays an important role in the de novo pathway of purine nucleotide biosynthesis. Catalyzes the first committed step in the biosynthesis of AMP from IMP. This is Adenylosuccinate synthetase from Alkaliphilus metalliredigens (strain QYMF).